We begin with the raw amino-acid sequence, 292 residues long: UDP-3-O-acyl-N-acetylglucosamine deacetylase (292 aa).

His75, His231, and Asp235 together coordinate Zn(2+). The Proton donor role is filled by His258.

This sequence belongs to the LpxC family. Requires Zn(2+) as cofactor.

The enzyme catalyses a UDP-3-O-[(3R)-3-hydroxyacyl]-N-acetyl-alpha-D-glucosamine + H2O = a UDP-3-O-[(3R)-3-hydroxyacyl]-alpha-D-glucosamine + acetate. It functions in the pathway glycolipid biosynthesis; lipid IV(A) biosynthesis; lipid IV(A) from (3R)-3-hydroxytetradecanoyl-[acyl-carrier-protein] and UDP-N-acetyl-alpha-D-glucosamine: step 2/6. Its function is as follows. Catalyzes the hydrolysis of UDP-3-O-myristoyl-N-acetylglucosamine to form UDP-3-O-myristoylglucosamine and acetate, the committed step in lipid A biosynthesis. This chain is UDP-3-O-acyl-N-acetylglucosamine deacetylase, found in Nautilia profundicola (strain ATCC BAA-1463 / DSM 18972 / AmH).